Consider the following 228-residue polypeptide: Cytochrome b6-f complex iron-sulfur subunit 1, chloroplastic (228 aa).

A chloroplast-targeting transit peptide spans 1 to 49 (MASSTLSPVTQLCSSKSGLSSVSQCLLVKPMKINSHGLGKDKRMKVKCM). The helical transmembrane segment at 72 to 92 (LLGALSLPTAGMLVPYGTFFV) threads the bilayer. Positions 115 to 211 (ASEWLKTHPP…ADIDDGKVVF (97 aa)) constitute a Rieske domain. C157, H159, C175, and H178 together coordinate [2Fe-2S] cluster. The cysteines at positions 162 and 177 are disulfide-linked.

This sequence belongs to the Rieske iron-sulfur protein family. The 4 large subunits of the cytochrome b6-f complex are cytochrome b6, subunit IV (17 kDa polypeptide, petD), cytochrome f and the Rieske protein, while the 4 small subunits are petG, petL, petM and petN. The complex functions as a dimer. Requires [2Fe-2S] cluster as cofactor.

The protein localises to the plastid. It is found in the chloroplast thylakoid membrane. The enzyme catalyses 2 oxidized [plastocyanin] + a plastoquinol + 2 H(+)(in) = 2 reduced [plastocyanin] + a plastoquinone + 4 H(+)(out). Its function is as follows. Component of the cytochrome b6-f complex, which mediates electron transfer between photosystem II (PSII) and photosystem I (PSI), cyclic electron flow around PSI, and state transitions. This Nicotiana tabacum (Common tobacco) protein is Cytochrome b6-f complex iron-sulfur subunit 1, chloroplastic (petC1).